The chain runs to 83 residues: Apolipoprotein C-I, basic form (83 aa).

A signal peptide spans 1 to 26 (MRLFLSLPVLVVVLSMVLEGPAPAQG).

Belongs to the apolipoprotein C1 family.

It localises to the secreted. Functionally, inhibitor of lipoprotein binding to the low density lipoprotein (LDL) receptor, LDL receptor-related protein, and very low density lipoprotein (VLDL) receptor. Associates with high density lipoproteins (HDL) and the triacylglycerol-rich lipoproteins in the plasma and makes up about 10% of the protein of the VLDL and 2% of that of HDL. Appears to interfere directly with fatty acid uptake and is also the major plasma inhibitor of cholesteryl ester transfer protein (CETP). Binds free fatty acids and reduces their intracellular esterification. Modulates the interaction of APOE with beta-migrating VLDL and inhibits binding of beta-VLDL to the LDL receptor-related protein. In Colobus guereza (Mantled guereza), this protein is Apolipoprotein C-I, basic form (APOC1B).